The sequence spans 225 residues: Enolase-phosphatase E1 (225 aa).

It belongs to the HAD-like hydrolase superfamily. MasA/MtnC family. Monomer. Mg(2+) is required as a cofactor.

It carries out the reaction 5-methylsulfanyl-2,3-dioxopentyl phosphate + H2O = 1,2-dihydroxy-5-(methylsulfanyl)pent-1-en-3-one + phosphate. It functions in the pathway amino-acid biosynthesis; L-methionine biosynthesis via salvage pathway; L-methionine from S-methyl-5-thio-alpha-D-ribose 1-phosphate: step 3/6. The protein operates within amino-acid biosynthesis; L-methionine biosynthesis via salvage pathway; L-methionine from S-methyl-5-thio-alpha-D-ribose 1-phosphate: step 4/6. Its function is as follows. Bifunctional enzyme that catalyzes the enolization of 2,3-diketo-5-methylthiopentyl-1-phosphate (DK-MTP-1-P) into the intermediate 2-hydroxy-3-keto-5-methylthiopentenyl-1-phosphate (HK-MTPenyl-1-P), which is then dephosphorylated to form the acireductone 1,2-dihydroxy-3-keto-5-methylthiopentene (DHK-MTPene). This is Enolase-phosphatase E1 from Pseudomonas aeruginosa (strain LESB58).